Reading from the N-terminus, the 892-residue chain is Alanine--tRNA ligase (892 aa).

Residues His565, His569, Cys678, and His682 each coordinate Zn(2+). The segment at 857–876 is disordered; sequence GGKGGGGRPDMAQAGGPDGA.

Belongs to the class-II aminoacyl-tRNA synthetase family. Requires Zn(2+) as cofactor.

It localises to the cytoplasm. The enzyme catalyses tRNA(Ala) + L-alanine + ATP = L-alanyl-tRNA(Ala) + AMP + diphosphate. In terms of biological role, catalyzes the attachment of alanine to tRNA(Ala) in a two-step reaction: alanine is first activated by ATP to form Ala-AMP and then transferred to the acceptor end of tRNA(Ala). Also edits incorrectly charged Ser-tRNA(Ala) and Gly-tRNA(Ala) via its editing domain. In Bradyrhizobium diazoefficiens (strain JCM 10833 / BCRC 13528 / IAM 13628 / NBRC 14792 / USDA 110), this protein is Alanine--tRNA ligase.